The chain runs to 135 residues: MSHAEKPMSDSVNHHHHRTFEVLTAEPVRSRRKPRHWSDEEKAQLVAEALSPGANVSAIARSQGLDPSQLYAWRRKALSSGMVAPLTEGAPAPVKFTRFEAVGSSMVEIVVGDIVVRAGADVDPDHLAKILRVVR.

The disordered stretch occupies residues 1 to 36 (MSHAEKPMSDSVNHHHHRTFEVLTAEPVRSRRKPRH).

It belongs to the transposase 8 family.

This is an uncharacterized protein from Sinorhizobium fredii (strain NBRC 101917 / NGR234).